Here is a 793-residue protein sequence, read N- to C-terminus: Ankyrin repeat domain-containing protein SOWAHB (793 aa).

Disordered regions lie at residues 83–185 (EEGL…QARA), 219–290 (ATAE…ELLT), 337–360 (QLPL…SSHS), and 396–543 (DFVD…SPRV). Low complexity-rich tracts occupy residues 96–108 (APSA…CSPR), 134–144 (AGAAARAADAA), and 175–185 (AAAAAGAQARA). S106 is subject to Phosphoserine. Residues 220-244 (TAEEKPARALPAQDDRGASREREEG) show a composition bias toward basic and acidic residues. The span at 246–273 (LAEPAPVPAVAHSPPATVEAATSRASPP) shows a compositional bias: low complexity. Position 271 is a phosphoserine (S271). Positions 396 to 406 (DFVDQESDGSE) are enriched in acidic residues. 2 stretches are compositionally biased toward low complexity: residues 407-417 (ESSSGPKDSPG) and 498-508 (RSSLAGRAKLS). Residues 521–533 (KRSRRPPRSRKPS) show a composition bias toward basic residues. 2 ANK repeats span residues 630–659 (TGYT…KAGI) and 669–699 (CGYT…RVNV). S761 is subject to Phosphoserine.

It belongs to the SOWAH family.

In Homo sapiens (Human), this protein is Ankyrin repeat domain-containing protein SOWAHB (SOWAHB).